A 379-amino-acid chain; its full sequence is uncharacterized protein (379 aa).

It belongs to the glycosyltransferase 28 family.

This is an uncharacterized protein from Methanosarcina acetivorans (strain ATCC 35395 / DSM 2834 / JCM 12185 / C2A).